The following is a 564-amino-acid chain: MFS-type transporter dmxR4 (564 aa).

Residues 1-61 (MSSERPDGSA…PAKEAPAKPA (61 aa)) form a disordered region. The span at 25–44 (TDSSRTSNDASQTSQDTAVQ) shows a compositional bias: polar residues. The segment covering 47–57 (PPKEAPAKEAP) has biased composition (basic and acidic residues). Helical transmembrane passes span 71 to 91 (IALL…DRSI), 106 to 126 (AGDI…FQLL), 138 to 158 (TVFV…GAAP), 169 to 189 (LAGI…VFLI), and 199 to 219 (GLFG…GGGF). Asn222 is a glycosylation site (N-linked (GlcNAc...) asparagine). 7 helical membrane passes run 227–247 (WCFY…ALWM), 265–285 (GLDL…LLAL), 299–319 (IIAL…LQAF), 348–368 (GVHL…GGFF), 376–396 (SPLA…IYTF), 405–425 (WIGS…APNL), and 438–458 (SALA…VSVG). N-linked (GlcNAc...) asparagine glycosylation is present at Asn469. 2 helical membrane passes run 470–490 (LSWI…VSFL) and 512–532 (VFMI…SMEW). The disordered stretch occupies residues 534 to 564 (SVKSRGSWDEKPAAKPTDKPTEEKKVPPEAV). Basic and acidic residues predominate over residues 539–564 (GSWDEKPAAKPTDKPTEEKKVPPEAV).

Belongs to the major facilitator superfamily. TCR/Tet family.

Its subcellular location is the membrane. Its function is as follows. MFS-type transporter; part of the gene cluster that mediates the biosynthesis of the dimeric xanthones cryptosporioptides. This is MFS-type transporter dmxR4 from Cryptosporiopsis sp. (strain 8999).